A 676-amino-acid polypeptide reads, in one-letter code: Kojibiose hydrolase (676 aa).

The N-terminal stretch at 1-20 (MNKGIIQLLALSLFCISVKA) is a signal peptide. Glu469 functions as the Proton donor in the catalytic mechanism. The Proton acceptor role is filled by Glu613.

This sequence belongs to the glycosyl hydrolase 65 family.

It catalyses the reaction kojibiose + H2O = beta-D-glucose + D-glucose. Its function is as follows. Glycosidase that specifically hydrolyzes kojibiose to beta-glucose and glucose. Besides its activity on kojibiose, is also able to act on alpha-1,2-oligoglucans with a higher degree of polymerization. Shows weak activity on nigerose, but is not capable of breaking down trehalose, maltose, isomaltose, sucrose, isomaltulose, turanose or melezitose. This chain is Kojibiose hydrolase, found in Mucilaginibacter mallensis.